The primary structure comprises 183 residues: MTATAQQLEYLKNSIKSIQDYPKPGILFRDVTSLLEDPKAYALSIDLLVERYKNAGITKVVGTEARGFLFGAPVALGLGVGFVPVRKPGKLPRETISENYDLEYGTDQLEIHVDAIKPGDKVLVVDDLLATGGTIEATVKLIRRLGGEVADAAFIINLFDLGGEQRLEKQGITSYSLVPFPGH.

The protein belongs to the purine/pyrimidine phosphoribosyltransferase family. In terms of assembly, homodimer.

Its subcellular location is the cytoplasm. It catalyses the reaction AMP + diphosphate = 5-phospho-alpha-D-ribose 1-diphosphate + adenine. Its pathway is purine metabolism; AMP biosynthesis via salvage pathway; AMP from adenine: step 1/1. Its function is as follows. Catalyzes a salvage reaction resulting in the formation of AMP, that is energically less costly than de novo synthesis. This chain is Adenine phosphoribosyltransferase, found in Shigella flexneri serotype 5b (strain 8401).